The following is a 493-amino-acid chain: Transcript termination protein A18 (493 aa).

One can recognise a Helicase ATP-binding domain in the interval 100 to 256; the sequence is MIELKRPLYI…NSIINIAKLS (157 aa). Position 113 to 120 (113 to 120) interacts with ATP; that stretch reads LACGFGKT. The DESH box signature appears at 206-209; that stretch reads DESH. The Helicase C-terminal domain occupies 309-456; sequence ILDTLVEEFK…IISLSVDKLG (148 aa).

It belongs to the helicase family. Poxviruses subfamily. Interacts with G2. Might be part of a transcription complex composed at least of G2, A18, and H5.

The protein resides in the virion. Its function is as follows. DNA helicase which seems to act as a postreplicative transcription termination factor. Involved in ATP-dependent release of nascent RNA. Forms a stable complex with single-stranded DNA, and to a lesser extent RNA. The chain is Transcript termination protein A18 from Mus musculus (Mouse).